Consider the following 176-residue polypeptide: Ribosome maturation factor RimM (176 aa).

Residues 93-166 enclose the PRC barrel domain; that stretch reads ADEYYHADLI…QVVIEPPNEI (74 aa).

The protein belongs to the RimM family. As to quaternary structure, binds ribosomal protein uS19.

Its subcellular location is the cytoplasm. Functionally, an accessory protein needed during the final step in the assembly of 30S ribosomal subunit, possibly for assembly of the head region. Essential for efficient processing of 16S rRNA. May be needed both before and after RbfA during the maturation of 16S rRNA. It has affinity for free ribosomal 30S subunits but not for 70S ribosomes. This chain is Ribosome maturation factor RimM, found in Rhodopseudomonas palustris (strain ATCC BAA-98 / CGA009).